Here is a 317-residue protein sequence, read N- to C-terminus: Transaldolase (317 aa).

Lys126 serves as the catalytic Schiff-base intermediate with substrate.

It belongs to the transaldolase family. Type 1 subfamily. Homodimer.

It localises to the cytoplasm. It catalyses the reaction D-sedoheptulose 7-phosphate + D-glyceraldehyde 3-phosphate = D-erythrose 4-phosphate + beta-D-fructose 6-phosphate. The protein operates within carbohydrate degradation; pentose phosphate pathway; D-glyceraldehyde 3-phosphate and beta-D-fructose 6-phosphate from D-ribose 5-phosphate and D-xylulose 5-phosphate (non-oxidative stage): step 2/3. Its function is as follows. Transaldolase is important for the balance of metabolites in the pentose-phosphate pathway. The chain is Transaldolase from Burkholderia pseudomallei (strain 1710b).